The chain runs to 178 residues: MKLKSVLLDEKAVNRTLIRISHEIIERNKGIDELVLLGIKTRGYPLAKRIASYIKGIEGVDVPVGSVDITLYRDDLTKISEDLEIKNLDLGLEIKDKKIIIIDDVLYTCRTARAAIDAIMDVNRPRGIQLAVLIDRGHKELPIRADYVGKNIPTSKNEVIAVSLKEIDGEDSVKIFDK.

A PRPP-binding motif is present at residues 99–111 (IIIIDDVLYTCRT).

This sequence belongs to the purine/pyrimidine phosphoribosyltransferase family. PyrR subfamily. As to quaternary structure, homodimer and homohexamer; in equilibrium.

It catalyses the reaction UMP + diphosphate = 5-phospho-alpha-D-ribose 1-diphosphate + uracil. Functionally, regulates transcriptional attenuation of the pyrimidine nucleotide (pyr) operon by binding in a uridine-dependent manner to specific sites on pyr mRNA. This disrupts an antiterminator hairpin in the RNA and favors formation of a downstream transcription terminator, leading to a reduced expression of downstream genes. In terms of biological role, also displays a weak uracil phosphoribosyltransferase activity which is not physiologically significant. This chain is Bifunctional protein PyrR, found in Clostridium beijerinckii (strain ATCC 51743 / NCIMB 8052) (Clostridium acetobutylicum).